The primary structure comprises 411 residues: Na(+)-translocating NADH-quinone reductase subunit F (411 aa).

A helical membrane pass occupies residues 5-25 (VILALGIAAFTVIVLVLVAII). The 95-residue stretch at 36 to 130 (GDITIGINDD…NMEVELPEEI (95 aa)) folds into the 2Fe-2S ferredoxin-type domain. Cys73, Cys79, Cys82, and Cys114 together coordinate [2Fe-2S] cluster. The 141-residue stretch at 133–273 (VKKWECTVIS…SGPFGEFFAK (141 aa)) folds into the FAD-binding FR-type domain.

Belongs to the NqrF family. Composed of six subunits; NqrA, NqrB, NqrC, NqrD, NqrE and NqrF. [2Fe-2S] cluster is required as a cofactor. FAD serves as cofactor.

The protein resides in the cell inner membrane. It carries out the reaction a ubiquinone + n Na(+)(in) + NADH + H(+) = a ubiquinol + n Na(+)(out) + NAD(+). In terms of biological role, NQR complex catalyzes the reduction of ubiquinone-1 to ubiquinol by two successive reactions, coupled with the transport of Na(+) ions from the cytoplasm to the periplasm. The first step is catalyzed by NqrF, which accepts electrons from NADH and reduces ubiquinone-1 to ubisemiquinone by a one-electron transfer pathway. This is Na(+)-translocating NADH-quinone reductase subunit F from Haemophilus influenzae (strain PittEE).